Here is a 25-residue protein sequence, read N- to C-terminus: Neuromedin-U-25 (25 aa).

Asparagine amide is present on Asn25.

It belongs to the NmU family.

The protein resides in the secreted. Its function is as follows. Stimulates uterine smooth muscle contraction and causes selective vasoconstriction. This chain is Neuromedin-U-25, found in Rana temporaria (European common frog).